Reading from the N-terminus, the 457-residue chain is MNYDLIIIGAGPAGYVAAEYAGKHKLKTLVVEKEYFGGVCLNVGCIPTKTLLKRAKIVDYLRHAQDYGISINGQVALNWNQLLEQKGKVVSKLVGGVKAIIASAKAETVMGEAKVLDPNTVEVAGKTYTTKSIVVATGSRPRYLTLPGFAEARQNGFVIDSTQALSLEGVPRKLVVVGGGVIGIEFAFLYASLGSEVTILQGVDRILEIFDTEVSDLVAKLLQTKNVKIITNAQVTRANNNEVFYSQNGQEGSVVGDRILVSIGRIPNTECLDGLNLQRDERNRIVLNQDLQTSIPNIYIVGDANAQLMLAHFAYQQGRYAVNHILNKKQVKPAQKLTCPSCIYTNPEVASVGYTEMELKKQGIPYVKTNLVLAHCGKAIADNETNGFVKMMFDPQTGKILGCCIIAATASDMIAELALAMGAGLTVFDIANSISPHPTINEMIADVCKKALFDHFK.

FAD-binding positions include 32–40, Lys-49, and Ala-113; that span reads EKEYFGGVC. The cysteines at positions 40 and 45 are disulfide-linked. Residues 178 to 182, Val-235, and 262 to 265 contribute to the NAD(+) site; these read GGGVI and SIGR. Residues Asp-303 and Ala-311 each coordinate FAD. His-437 serves as the catalytic Proton acceptor.

The protein belongs to the class-I pyridine nucleotide-disulfide oxidoreductase family. In terms of assembly, homodimer. FAD serves as cofactor.

The protein localises to the cytoplasm. The enzyme catalyses N(6)-[(R)-dihydrolipoyl]-L-lysyl-[protein] + NAD(+) = N(6)-[(R)-lipoyl]-L-lysyl-[protein] + NADH + H(+). In terms of biological role, lipoamide dehydrogenase is a component of the alpha-ketoacid dehydrogenase complexes. This chain is Dihydrolipoyl dehydrogenase (pdhD), found in Mycoplasma pneumoniae (strain ATCC 29342 / M129 / Subtype 1) (Mycoplasmoides pneumoniae).